The primary structure comprises 379 residues: Queuine tRNA-ribosyltransferase (379 aa).

Asp-93 (proton acceptor) is an active-site residue. Substrate is bound by residues 93 to 97, Asp-147, Gln-191, and Gly-218; that span reads DSGGF. Positions 249-255 are RNA binding; sequence GVGKPED. Asp-268 serves as the catalytic Nucleophile. The tract at residues 273 to 277 is RNA binding; important for wobble base 34 recognition; it reads TRNAR. Zn(2+) contacts are provided by Cys-306, Cys-308, Cys-311, and His-337.

It belongs to the queuine tRNA-ribosyltransferase family. As to quaternary structure, homodimer. Within each dimer, one monomer is responsible for RNA recognition and catalysis, while the other monomer binds to the replacement base PreQ1. Zn(2+) is required as a cofactor.

It carries out the reaction 7-aminomethyl-7-carbaguanine + guanosine(34) in tRNA = 7-aminomethyl-7-carbaguanosine(34) in tRNA + guanine. The protein operates within tRNA modification; tRNA-queuosine biosynthesis. In terms of biological role, catalyzes the base-exchange of a guanine (G) residue with the queuine precursor 7-aminomethyl-7-deazaguanine (PreQ1) at position 34 (anticodon wobble position) in tRNAs with GU(N) anticodons (tRNA-Asp, -Asn, -His and -Tyr). Catalysis occurs through a double-displacement mechanism. The nucleophile active site attacks the C1' of nucleotide 34 to detach the guanine base from the RNA, forming a covalent enzyme-RNA intermediate. The proton acceptor active site deprotonates the incoming PreQ1, allowing a nucleophilic attack on the C1' of the ribose to form the product. After dissociation, two additional enzymatic reactions on the tRNA convert PreQ1 to queuine (Q), resulting in the hypermodified nucleoside queuosine (7-(((4,5-cis-dihydroxy-2-cyclopenten-1-yl)amino)methyl)-7-deazaguanosine). The chain is Queuine tRNA-ribosyltransferase from Mannheimia succiniciproducens (strain KCTC 0769BP / MBEL55E).